Reading from the N-terminus, the 562-residue chain is NRAMP-like transporter smf-1 (562 aa).

Over 1 to 55 (MASSNNDGPIEPEAEPWRITQNDHLEQDLLEEDAESQERVDIPVDDVEKAFSFKK) the chain is Cytoplasmic. The chain crosses the membrane as a helical span at residues 56 to 76 (LWAFTGPGFLMSIAYLDPGNI). The Extracellular segment spans residues 77–83 (ESDLQSG). Residues 84-104 (AQAAYKLLWVLLSAHIIGMLL) traverse the membrane as a helical segment. Over 105-140 (QRMSARLGVVSGKHMAEVAYQFYPRLPRIILWLMIE) the chain is Cytoplasmic. Residues 141 to 161 (IAIVCSDMQEVIGTAIAIFLL) form a helical membrane-spanning segment. Residues 162–164 (SKG) lie on the Extracellular side of the membrane. The helical transmembrane segment at 165 to 185 (FVPLYVGVFITILDTFTFLLI) threads the bilayer. The Cytoplasmic segment spans residues 186–194 (DRYGIRKLE). The chain crosses the membrane as a helical span at residues 195–215 (LIFGFLILTMTVSFGYEFVVV). Residues 216–241 (KPPIGEVISGMVVPWCAGCGKGEFMQ) lie on the Extracellular side of the membrane. A helical membrane pass occupies residues 242 to 262 (AISVVGAVIMPHNLYLHSALV). The Cytoplasmic portion of the chain corresponds to 263–287 (KSRRVDRKDRRRVAEANKYFTLESA). The chain crosses the membrane as a helical span at residues 288–308 (IALFLSFFINLFVVAVFAHGL). Over 309-347 (YQKTNADVREMCIARHDIPDADIFPNNTEPVEVDIYKGG) the chain is Extracellular. The N-linked (GlcNAc...) asparagine glycan is linked to asparagine 334. The chain crosses the membrane as a helical span at residues 348–368 (IYLGCQFGAIAMFIWGIGIFA). Residues 369 to 398 (AGQSSTMTGTYTGQFVMEGFVKIEWPKWKR) lie on the Cytoplasmic side of the membrane. The helical transmembrane segment at 399–419 (VLITRAIAITPTLVLTFYSQG) threads the bilayer. At 420–428 (VQNLTGMND) the chain is on the extracellular side. Asparagine 422 carries an N-linked (GlcNAc...) asparagine glycan. The helical transmembrane segment at 429 to 449 (FLNCVQMIQLPFALIPIITFT) threads the bilayer. The Cytoplasmic portion of the chain corresponds to 450 to 462 (SSRKIMHDFRSSK). A helical membrane pass occupies residues 463–483 (VFQIFALITSALILSINVYFI). Residues 484 to 496 (SDYVFSRLGSEWY) are Extracellular-facing. A helical transmembrane segment spans residues 497–517 (IIMVLAPITFAYVLFVLYLAL). Residues 518 to 562 (YCLVSCEIIPDTVSIRGFSFNKSYENDAPWLAVDSSAVHDNAGYQ) are Cytoplasmic-facing.

Belongs to the NRAMP family. As to expression, expressed in dopaminergic neurons (at protein level). Expressed predominantly in anterior and posterior intestine, rectal gland cell, H-shaped excretory cell, vulva cells, proximal uterus and spermatheca in adults. Weakly expressed in hyp7 hypodermis, pharyngeal muscles and some anterior sensory, ring and posterior head neurons in adults. Expressed in the anchor cell at the larval stage.

The protein localises to the apical cell membrane. It localises to the cytoplasmic vesicle membrane. In terms of biological role, probable divalent metal ion transporter which regulates Mn(2+) uptake. The chain is NRAMP-like transporter smf-1 (smf-1) from Caenorhabditis elegans.